Here is a 328-residue protein sequence, read N- to C-terminus: 4-hydroxythreonine-4-phosphate dehydrogenase (328 aa).

Substrate is bound by residues histidine 130 and threonine 131. A divalent metal cation contacts are provided by histidine 163, histidine 208, and histidine 263. The substrate site is built by lysine 271, asparagine 280, and arginine 289.

It belongs to the PdxA family. In terms of assembly, homodimer. The cofactor is Zn(2+). It depends on Mg(2+) as a cofactor. Requires Co(2+) as cofactor.

The protein localises to the cytoplasm. The catalysed reaction is 4-(phosphooxy)-L-threonine + NAD(+) = 3-amino-2-oxopropyl phosphate + CO2 + NADH. Its pathway is cofactor biosynthesis; pyridoxine 5'-phosphate biosynthesis; pyridoxine 5'-phosphate from D-erythrose 4-phosphate: step 4/5. Functionally, catalyzes the NAD(P)-dependent oxidation of 4-(phosphooxy)-L-threonine (HTP) into 2-amino-3-oxo-4-(phosphooxy)butyric acid which spontaneously decarboxylates to form 3-amino-2-oxopropyl phosphate (AHAP). In Burkholderia vietnamiensis (strain G4 / LMG 22486) (Burkholderia cepacia (strain R1808)), this protein is 4-hydroxythreonine-4-phosphate dehydrogenase.